Consider the following 501-residue polypeptide: MSNEEINIHEAEEQLSEQEMLRRQKLAELQEAGKDPFDVYKVERTHSSADVKDNFEELEGKEVKVAGRLMSKRGQGKVVFADLADLPGKIQLFIKIDNVGEEALKEFKTFDLGDWVAATGEVFKTKMGEVSVKVTSFELICKSLKPLPEKWHGLKDPDLRYRQREVDIITNPEVKDTFIKRSQIVKAIREFLDNRGFLEVDTPILSPIAGGAAARPFITHHNALDIDMYLRIATELYLKRLIVAGFEKVYEMGKNFRNEGVSVRHNPEFTAIELYEAYADYNDMMEIMENMIAYVCEKVNGSTKVTYEGTEIDFTPPWRRITMVDAVKEFAGIDFNEIKSDEEAQAIAKEKNLEFPKPLDKVTKGEVLNMLFEEYGEDKLIQPTFLIDYPVEISPLTKKKRGNEMFTERFEGFVYGREVCNAYSELNDPIVQRERFEQQAREREYGDDEAYMLDEEFMSALETGMPPTGGLGIGIDRMIMFLTDSSSIRDVILFPTMKPQK.

Residues Glu-411 and Glu-418 each coordinate Mg(2+).

Belongs to the class-II aminoacyl-tRNA synthetase family. In terms of assembly, homodimer. Requires Mg(2+) as cofactor.

The protein localises to the cytoplasm. The catalysed reaction is tRNA(Lys) + L-lysine + ATP = L-lysyl-tRNA(Lys) + AMP + diphosphate. This is Lysine--tRNA ligase from Clostridium perfringens (strain ATCC 13124 / DSM 756 / JCM 1290 / NCIMB 6125 / NCTC 8237 / Type A).